The sequence spans 288 residues: MSHLKQLRTRIKSVKSTQKITKAMQLVSASKMAKIKSQIAKSNFYIEAISKMMSDIVSIDMYELSIEEQKFFNTIPNKATLLIVMTSQRGLCGTFNYSIIKQVKYDIKELENKGEQIKLIIIGKKGYEALKMQYASYIDSYFELPKIHAENLILQVKQKIMSLVANLEVSNCVIYFNKFKNAMTQIMTRQQVLPVEKYHDDSKIENDHYEYEGKNLISNLINLYVSSQINYALLQSRASEEGARMTAMENATNNANDLISKLVLKLNRSRQAIITTELIEIIAGSEAV.

The protein belongs to the ATPase gamma chain family. As to quaternary structure, F-type ATPases have 2 components, CF(1) - the catalytic core - and CF(0) - the membrane proton channel. CF(1) has five subunits: alpha(3), beta(3), gamma(1), delta(1), epsilon(1). CF(0) has three main subunits: a, b and c.

The protein resides in the cell inner membrane. Functionally, produces ATP from ADP in the presence of a proton gradient across the membrane. The gamma chain is believed to be important in regulating ATPase activity and the flow of protons through the CF(0) complex. In Rickettsia akari (strain Hartford), this protein is ATP synthase gamma chain.